Here is a 431-residue protein sequence, read N- to C-terminus: Serine--tRNA ligase (431 aa).

237 to 239 lines the L-serine pocket; that stretch reads TAE. 268-270 is an ATP binding site; sequence RSE. Residue E291 coordinates L-serine. 355–358 is a binding site for ATP; the sequence is EISS. S390 provides a ligand contact to L-serine.

It belongs to the class-II aminoacyl-tRNA synthetase family. Type-1 seryl-tRNA synthetase subfamily. As to quaternary structure, homodimer. The tRNA molecule binds across the dimer.

The protein resides in the cytoplasm. It catalyses the reaction tRNA(Ser) + L-serine + ATP = L-seryl-tRNA(Ser) + AMP + diphosphate + H(+). It carries out the reaction tRNA(Sec) + L-serine + ATP = L-seryl-tRNA(Sec) + AMP + diphosphate + H(+). Its pathway is aminoacyl-tRNA biosynthesis; selenocysteinyl-tRNA(Sec) biosynthesis; L-seryl-tRNA(Sec) from L-serine and tRNA(Sec): step 1/1. Its function is as follows. Catalyzes the attachment of serine to tRNA(Ser). Is also able to aminoacylate tRNA(Sec) with serine, to form the misacylated tRNA L-seryl-tRNA(Sec), which will be further converted into selenocysteinyl-tRNA(Sec). This is Serine--tRNA ligase from Neisseria meningitidis serogroup C (strain 053442).